Consider the following 116-residue polypeptide: uncharacterized protein (116 aa).

Residues 1 to 15 (MKKYFLILASFMLVA) form the signal peptide.

This is an uncharacterized protein from Haemophilus influenzae (strain ATCC 51907 / DSM 11121 / KW20 / Rd).